The primary structure comprises 140 residues: Callisulfakinin (140 aa).

Positions 1–30 (MYSQQRIFNSKYFIFFIAVLSIFWLPTMSA) are cleaved as a signal peptide. A propeptide spanning residues 31 to 109 (RNLENSKNEN…LEYEDEDRSK (79 aa)) is cleaved from the precursor. Tyr-114 bears the Sulfotyrosine mark. Phe-119 is modified (phenylalanine amide). Position 131 is a sulfotyrosine (Tyr-131). Phe-136 bears the Phenylalanine amide mark. Positions 139–140 (SI) are excised as a propeptide.

It belongs to the gastrin/cholecystokinin family. In brain, it is specifically expressed in four pairs of neurons. Not expressed in other cells of the brain and in the thoracico-abdominal ganglion.

The protein localises to the secreted. In terms of biological role, callisulfakinin I is a neuropeptide. The existence of Callisulfakinin II is uncertain. The chain is Callisulfakinin from Calliphora vomitoria (Blue bottle fly).